We begin with the raw amino-acid sequence, 236 residues long: Aminopyrimidine aminohydrolase (236 aa).

Residue aspartate 44 participates in substrate binding. The Nucleophile role is filled by cysteine 135. Substrate is bound by residues tyrosine 139 and tyrosine 163. Catalysis depends on glutamate 205, which acts as the Proton donor.

Belongs to the TenA family. As to quaternary structure, homotetramer.

The enzyme catalyses 4-amino-5-aminomethyl-2-methylpyrimidine + H2O = 4-amino-5-hydroxymethyl-2-methylpyrimidine + NH4(+). The catalysed reaction is thiamine + H2O = 5-(2-hydroxyethyl)-4-methylthiazole + 4-amino-5-hydroxymethyl-2-methylpyrimidine + H(+). The protein operates within cofactor biosynthesis; thiamine diphosphate biosynthesis. Its function is as follows. Catalyzes an amino-pyrimidine hydrolysis reaction at the C5' of the pyrimidine moiety of thiamine compounds, a reaction that is part of a thiamine salvage pathway. Thus, catalyzes the conversion of 4-amino-5-aminomethyl-2-methylpyrimidine to 4-amino-5-hydroxymethyl-2-methylpyrimidine (HMP). To a lesser extent, is also able to catalyze the hydrolytic cleavage of thiamine; however, this thiaminase activity is unlikely to be physiologically relevant. Therefore, is involved in the regeneration of the thiamine pyrimidine from thiamine degraded products present in the environment, rather than in thiamine degradation. In Bacillus subtilis (strain 168), this protein is Aminopyrimidine aminohydrolase.